The following is a 515-amino-acid chain: 2-(3-amino-3-carboxypropyl)histidine synthase subunit 2 (515 aa).

Positions 104, 125, and 353 each coordinate [4Fe-4S] cluster. Residues 493 to 515 (GMDEPSVLEQGRSGVARGYTEEK) form a disordered region.

Belongs to the DPH1/DPH2 family. DPH2 subfamily. As to quaternary structure, component of the 2-(3-amino-3-carboxypropyl)histidine synthase complex composed of DPH1, DPH2, DPH3 and a NADH-dependent reductase, predominantly CBR1. [4Fe-4S] cluster serves as cofactor.

It localises to the cytoplasm. It participates in protein modification; peptidyl-diphthamide biosynthesis. Functionally, required for the first step of diphthamide biosynthesis, a post-translational modification of histidine which occurs in elongation factor 2. DPH1 and DPH2 transfer a 3-amino-3-carboxypropyl (ACP) group from S-adenosyl-L-methionine (SAM) to a histidine residue, the reaction is assisted by a reduction system comprising DPH3 and a NADH-dependent reductase, predominantly CBR1. Facilitates the reduction of the catalytic iron-sulfur cluster found in the DPH1 subunit. This Cryptococcus neoformans var. neoformans serotype D (strain B-3501A) (Filobasidiella neoformans) protein is 2-(3-amino-3-carboxypropyl)histidine synthase subunit 2 (DPH2).